The chain runs to 391 residues: Elongation factor Tu (391 aa).

Residues 10–201 (KPHVNIGTIG…EVDKYIPTPE (192 aa)) form the tr-type G domain. The G1 stretch occupies residues 19–26 (GHVDHGKT). A GTP-binding site is contributed by 19–26 (GHVDHGKT). Threonine 26 lines the Mg(2+) pocket. The segment at 55–59 (GITIS) is G2. The interval 76 to 79 (DCPG) is G3. GTP contacts are provided by residues 76-80 (DCPGH) and 131-134 (NKVD). The interval 131-134 (NKVD) is G4. The tract at residues 169 to 171 (SAL) is G5.

This sequence belongs to the TRAFAC class translation factor GTPase superfamily. Classic translation factor GTPase family. EF-Tu/EF-1A subfamily. In terms of assembly, monomer.

The protein resides in the cytoplasm. The catalysed reaction is GTP + H2O = GDP + phosphate + H(+). GTP hydrolase that promotes the GTP-dependent binding of aminoacyl-tRNA to the A-site of ribosomes during protein biosynthesis. This chain is Elongation factor Tu, found in Chelativorans sp. (strain BNC1).